The primary structure comprises 92 residues: Small ribosomal subunit protein uS19 (92 aa).

It belongs to the universal ribosomal protein uS19 family.

In terms of biological role, protein S19 forms a complex with S13 that binds strongly to the 16S ribosomal RNA. The protein is Small ribosomal subunit protein uS19 of Bacillus thuringiensis subsp. konkukian (strain 97-27).